A 239-amino-acid chain; its full sequence is Ubiquinone biosynthesis O-methyltransferase (239 aa).

S-adenosyl-L-methionine is bound by residues Arg44, Gly63, Asp84, and Met128.

The protein belongs to the methyltransferase superfamily. UbiG/COQ3 family.

It carries out the reaction a 3-demethylubiquinol + S-adenosyl-L-methionine = a ubiquinol + S-adenosyl-L-homocysteine + H(+). The catalysed reaction is a 3-(all-trans-polyprenyl)benzene-1,2-diol + S-adenosyl-L-methionine = a 2-methoxy-6-(all-trans-polyprenyl)phenol + S-adenosyl-L-homocysteine + H(+). It participates in cofactor biosynthesis; ubiquinone biosynthesis. In terms of biological role, O-methyltransferase that catalyzes the 2 O-methylation steps in the ubiquinone biosynthetic pathway. This is Ubiquinone biosynthesis O-methyltransferase from Xanthomonas axonopodis pv. citri (strain 306).